A 602-amino-acid polypeptide reads, in one-letter code: Peptide-N(4)-(N-acetyl-beta-glucosaminyl)asparagine amidase (602 aa).

The Thioredoxin domain maps to 2–130 (PVREVSRLPE…EKKFLERFVG (129 aa)). Positions 189, 192, 222, and 225 each coordinate Zn(2+). Cys248 (nucleophile) is an active-site residue. Residues His275 and Asp292 contribute to the active site. The PAW domain occupies 400–602 (DMGGRTTGSK…ESMVVRVYMK (203 aa)).

It belongs to the transglutaminase-like superfamily. PNGase family. Requires Zn(2+) as cofactor.

Its subcellular location is the cytoplasm. The protein resides in the endoplasmic reticulum. It carries out the reaction Hydrolysis of an N(4)-(acetyl-beta-D-glucosaminyl)asparagine residue in which the glucosamine residue may be further glycosylated, to yield a (substituted) N-acetyl-beta-D-glucosaminylamine and a peptide containing an aspartate residue.. In terms of biological role, specifically deglycosylates the denatured form of N-linked glycoproteins in the cytoplasm and assists their proteasome-mediated degradation. Cleaves the beta-aspartyl-glucosamine (GlcNAc) of the glycan and the amide side chain of Asn, converting Asn to Asp. Prefers proteins containing high-mannose over those bearing complex type oligosaccharides. Can recognize misfolded proteins in the endoplasmic reticulum that are exported to the cytosol to be destroyed and deglycosylate them, while it has no activity toward native proteins. Deglycosylation is a prerequisite for subsequent proteasome-mediated degradation of some, but not all, misfolded glycoproteins. Also displays oxidoreductase (thioredoxin) activity. The sequence is that of Peptide-N(4)-(N-acetyl-beta-glucosaminyl)asparagine amidase (png-1) from Caenorhabditis briggsae.